A 175-amino-acid chain; its full sequence is Methylated-DNA--protein-cysteine methyltransferase (175 aa).

The active-site Nucleophile; methyl group acceptor is the Cys142.

The protein belongs to the MGMT family.

The protein resides in the cytoplasm. It carries out the reaction a 6-O-methyl-2'-deoxyguanosine in DNA + L-cysteinyl-[protein] = S-methyl-L-cysteinyl-[protein] + a 2'-deoxyguanosine in DNA. The enzyme catalyses a 4-O-methyl-thymidine in DNA + L-cysteinyl-[protein] = a thymidine in DNA + S-methyl-L-cysteinyl-[protein]. Functionally, involved in the cellular defense against the biological effects of O6-methylguanine (O6-MeG) and O4-methylthymine (O4-MeT) in DNA. Repairs the methylated nucleobase in DNA by stoichiometrically transferring the methyl group to a cysteine residue in the enzyme. This is a suicide reaction: the enzyme is irreversibly inactivated. The polypeptide is Methylated-DNA--protein-cysteine methyltransferase (Thermococcus sibiricus (strain DSM 12597 / MM 739)).